Here is a 139-residue protein sequence, read N- to C-terminus: Arsenate reductase (139 aa).

Active-site nucleophile residues include C10, C82, and C89. Disulfide bonds link C10–C82 and C82–C89.

This sequence belongs to the low molecular weight phosphotyrosine protein phosphatase family. Thioredoxin-coupled ArsC subfamily. In terms of assembly, monomer.

It is found in the cytoplasm. It carries out the reaction arsenate + [thioredoxin]-dithiol + H(+) = arsenite + [thioredoxin]-disulfide + H2O. With respect to regulation, activity is potassium and sulfate-independent. Catalyzes the reduction of arsenate [As(V)] to arsenite [As(III)]. In vitro, can dephosphorylate para-nitrophenyl phosphate (pNPP). This is Arsenate reductase from Bacillus subtilis (strain 168).